The primary structure comprises 152 residues: MSLVIPEKFQHILRVLNTNIDGRRKIAFAITAIKGVGRRYAHVVLRKADIDLNKRAGELTEDEVERVVTIMQNPRQYKIPDWFLNRQKDIKDGKYSQVLANGLDNKLREDLERLKKIRAHRGLRHFWGLRVRGQHTKTTGRRGRTVGVSKKK.

The protein belongs to the universal ribosomal protein uS13 family. Component of the small ribosomal subunit.

Its subcellular location is the cytoplasm. Functionally, component of the small ribosomal subunit. The ribosome is a large ribonucleoprotein complex responsible for the synthesis of proteins in the cell. Plays an essential role in early embryonic development. This is Small ribosomal subunit protein uS13 (rps18) from Danio rerio (Zebrafish).